We begin with the raw amino-acid sequence, 130 residues long: uncharacterized protein (130 aa).

Residues 1–19 form the signal peptide; the sequence is MKVLGNILWWAFVGFMAYA.

This is an uncharacterized protein from Escherichia coli (strain K12).